The chain runs to 57 residues: Preprotein translocase subunit SecG (57 aa).

Topologically, residues Met-1 to Asn-33 are cytoplasmic. Residues Pro-34–His-55 traverse the membrane as a helical segment. Over Pro-56–Leu-57 the chain is Extracellular.

It belongs to the SEC61-beta family. In terms of assembly, component of the protein translocase complex. Heterotrimer consisting of alpha (SecY), beta (SecG) and gamma (SecE) subunits. Can form oligomers of the heterotrimer.

It is found in the cell membrane. Its function is as follows. Involved in protein export. The function of the beta subunit is unknown, but it may be involved in stabilization of the trimeric complex. This Pyrobaculum islandicum (strain DSM 4184 / JCM 9189 / GEO3) protein is Preprotein translocase subunit SecG.